The chain runs to 1732 residues: Polycystin-1-like protein 3 (1732 aa).

Residues 1–23 (MFFKGGSWLWLYIRTSIILGSEL) form the signal peptide. Over 24-697 (NSPAPHGQNN…IKLFLRVTNN (674 aa)) the chain is Extracellular. Residues 30 to 138 (GQNNCYQLNR…CLLKYYFICQ (109 aa)) enclose the C-type lectin domain. 2 disulfides stabilise this stretch: C51/C137 and C112/C129. 5 N-linked (GlcNAc...) asparagine glycosylation sites follow: N286, N363, N515, N537, and N575. A GAIN-B domain is found at 523-685 (TSLNMSTHQL…FVVPRTVNVE (163 aa)). Disulfide bonds link C635-C663 and C650-C665. Residues 635–685 (CYYWEIHNQTWSSAGCQVGPQSTILRTQCLCNHLTFFASDFFVVPRTVNVE) form a GPS region. The chain crosses the membrane as a helical span at residues 698 to 718 (PVGVSLLASLLGFYVITVVWA). At 719–905 (RKKDQADMQK…PWNQFTRVQR (187 aa)) the chain is on the cytoplasmic side. Positions 743-860 (FHYLIQVYTG…GDCELDRVFI (118 aa)) constitute a PLAT domain. The helical transmembrane segment at 906–926 (LSCCMTLLLCNMVINVMFWKI) threads the bilayer. Topologically, residues 927–939 (NSTTAKRDEQMRP) are extracellular. The helical transmembrane segment at 940 to 960 (FAVAWSELLVSIHTAVILFPI) threads the bilayer. The Cytoplasmic segment spans residues 961-1154 (NLVIGRLFPL…ISNGLSKWLT (194 aa)). Residues 1155–1175 (SVCWLLLGFTSLASAFFTALY) traverse the membrane as a helical segment. The Extracellular portion of the chain corresponds to 1176–1198 (SLELSKDQATSWMISIILSVLQN). A helical transmembrane segment spans residues 1199–1219 (IFISQPVKVVFFTFLYSLMMS). The Cytoplasmic segment spans residues 1220 to 1289 (RMPRLNKENE…KLTGDILVQI (70 aa)). Residues 1290–1300 (LFLTLLMTAIY) form a helical membrane-spanning segment. At 1301–1461 (SAKNSNRFYL…SFTSLQMSKK (161 aa)) the chain is on the extracellular side. Residues 1462-1491 (GCVWSIISQVIYYLLVCYYAFIQGCQLKQQ) form a helical membrane-spanning segment. The Cytoplasmic portion of the chain corresponds to 1492-1500 (KWRFFTGKR). A helical transmembrane segment spans residues 1501–1519 (NILDTSIILISFILLGLDM). At 1520–1550 (KSISLHKKNMARYRDDQDRFISFYEAVKVNS) the chain is on the extracellular side. Residues 1551-1572 (AATHLVGFPVLLATVQLWNLLR) traverse the membrane as a helical segment. Residues 1573 to 1589 (HSPRLRVISRTLSRAWD) lie on the Cytoplasmic side of the membrane. The chain crosses the membrane as a helical span at residues 1590-1614 (EVVGFLLIILILLTGYAIAFNLLFG). The tract at residues 1613–1651 (FGCSISDYRTFFSSAVTVVGLLMGISHQEEVFALDPVLG) is channel pore-region. The Extracellular portion of the chain corresponds to 1615 to 1647 (CSISDYRTFFSSAVTVVGLLMGISHQEEVFALD). The chain crosses the membrane as a helical span at residues 1648 to 1667 (PVLGTFLILTSVILMVLVVI). Topologically, residues 1668-1732 (NLFVSAILMA…SDTEVLDELP (65 aa)) are cytoplasmic.

It belongs to the polycystin family. As to quaternary structure, heterotetramer with PKD2L1, composed of 3 subunit of PKD2L1 and 1 subunit of PKD1L3. Post-translationally, autoproteolytically processed at the GPS region of the GAIN-B domain; this cleavage modulates receptor activity. As to expression, highly expressed in placenta, weakly in heart and lung.

It is found in the cell membrane. The enzyme catalyses Ca(2+)(in) = Ca(2+)(out). It catalyses the reaction Na(+)(in) = Na(+)(out). It carries out the reaction K(+)(in) = K(+)(out). The catalysed reaction is Mg(2+)(in) = Mg(2+)(out). Its activity is regulated as follows. The non-selective cation channel is gated following an off-response property by acid: gated open after the removal of acid stimulus, but not during acid application. Regulation of non-selective cation channel activity by external Ca(2+) is bimodal, first sensitizing and subsequently inactivating the current. In terms of biological role, pore-forming subunit of a heterotetrameric, non-selective cation channel that is permeable to Ca(2+). Also shows permeability towards NA(1+), K(+) and Mg(2+). Heterotetrameric complex channel is activated by external low pH and Ca(2+), but opens only when the extracellular pH rises again and after the removal of acid stimulus. May act as a sour taste receptor in gustatory cells; however, its contribution to sour taste perception is unclear in vivo and may be indirect. This Homo sapiens (Human) protein is Polycystin-1-like protein 3.